The primary structure comprises 406 residues: WD repeat and SOCS box-containing protein 2 (406 aa).

The segment at 70-89 (AKSRSSKNETKGRGSPKEKT) is disordered. WD repeat units lie at residues 107–150 (PPSK…LLLN), 153–193 (GHQD…KQIQ), 197–236 (GHLQ…LIRK), 239–278 (GHQS…RLRS), and 293–332 (VHIS…PIAF). In terms of domain architecture, SOCS box spans 358–406 (HVQFWTAPRVLSSLKHLCRKALRSFLTTYQVLALPIPKKMKEFLTYRTF).

It participates in protein modification; protein ubiquitination. In terms of biological role, may be a substrate-recognition component of a SCF-like ECS (Elongin-Cullin-SOCS-box protein) E3 ubiquitin ligase complex which mediates the ubiquitination and subsequent proteasomal degradation of target proteins. In Bos taurus (Bovine), this protein is WD repeat and SOCS box-containing protein 2 (WSB2).